The following is a 342-amino-acid chain: Isopentenyl-diphosphate delta-isomerase (342 aa).

Position 11 to 12 (11 to 12 (RK)) interacts with substrate. Residues S68, 69–71 (SMT), S99, and N128 each bind FMN. 99–101 (SQR) is a binding site for substrate. Q162 is a substrate binding site. E163 lines the Mg(2+) pocket. FMN-binding positions include K194, S219, T224, 275–277 (GVR), and 296–297 (AK).

The protein belongs to the IPP isomerase type 2 family. Homooctamer. Dimer of tetramers. Requires FMN as cofactor. NADPH serves as cofactor. Mg(2+) is required as a cofactor.

It is found in the cytoplasm. It catalyses the reaction isopentenyl diphosphate = dimethylallyl diphosphate. Functionally, involved in the biosynthesis of isoprenoids. Catalyzes the 1,3-allylic rearrangement of the homoallylic substrate isopentenyl (IPP) to its allylic isomer, dimethylallyl diphosphate (DMAPP). The chain is Isopentenyl-diphosphate delta-isomerase from Legionella pneumophila subsp. pneumophila (strain Philadelphia 1 / ATCC 33152 / DSM 7513).